A 271-amino-acid chain; its full sequence is Phosphonoacetaldehyde hydrolase (271 aa).

Asp12 acts as the Nucleophile in catalysis. Residues Asp12 and Ala14 each coordinate Mg(2+). Lys54 (schiff-base intermediate with substrate) is an active-site residue. A Mg(2+)-binding site is contributed by Asp188.

This sequence belongs to the HAD-like hydrolase superfamily. PhnX family. In terms of assembly, homodimer. Requires Mg(2+) as cofactor.

The enzyme catalyses phosphonoacetaldehyde + H2O = acetaldehyde + phosphate + H(+). In terms of biological role, involved in phosphonate degradation. The sequence is that of Phosphonoacetaldehyde hydrolase from Vibrio cholerae serotype O1 (strain ATCC 39541 / Classical Ogawa 395 / O395).